The chain runs to 369 residues: Cytokine receptor common subunit gamma (369 aa).

Residues 1-22 (MLKPSLPFTSLLFLQLPLLGVG) form the signal peptide. The Extracellular segment spans residues 23 to 262 (LNTTILTPNG…ENPFLFALEA (240 aa)). N24, N71, N75, and N84 each carry an N-linked (GlcNAc...) asparagine glycan. C62 and C72 form a disulfide bridge. A disulfide bond links C102 and C115. The Fibronectin type-III domain maps to 156–253 (APENLTLHKL…IHWGSNTSKE (98 aa)). N-linked (GlcNAc...) asparagine glycosylation occurs at N159. C182 and C231 are disulfide-bonded. The short motif at 237–241 (WSEWS) is the WSXWS motif element. An N-linked (GlcNAc...) asparagine glycan is attached at N249. The helical transmembrane segment at 263 to 283 (VVISVGSMGLIISLLCVYFWL) threads the bilayer. The Cytoplasmic segment spans residues 284-369 (ERTMPRIPTL…PPCYTLKPET (86 aa)). The Box 1 motif signature appears at 286–294 (TMPRIPTLK). A Phosphothreonine modification is found at T292.

Belongs to the type I cytokine receptor family. Type 5 subfamily. As to quaternary structure, the gamma subunit is common to the IL2, IL4, IL7, IL15, IL21 and probably also the IL13 receptors. Interacts with SHB upon interleukin stimulation. Interacts with IL9. (Microbial infection) Interacts with HTLV-1 accessory protein p12I.

It is found in the cell membrane. The protein resides in the cell surface. Common subunit for the receptors for a variety of interleukins. Probably in association with IL15RA, involved in the stimulation of neutrophil phagocytosis by IL15. This chain is Cytokine receptor common subunit gamma (IL2RG), found in Homo sapiens (Human).